The sequence spans 160 residues: Ribosomal RNA large subunit methyltransferase H (160 aa).

S-adenosyl-L-methionine contacts are provided by residues Leu78, Gly109, and 128-133 (LSNLTL).

The protein belongs to the RNA methyltransferase RlmH family. As to quaternary structure, homodimer.

Its subcellular location is the cytoplasm. It carries out the reaction pseudouridine(1915) in 23S rRNA + S-adenosyl-L-methionine = N(3)-methylpseudouridine(1915) in 23S rRNA + S-adenosyl-L-homocysteine + H(+). Functionally, specifically methylates the pseudouridine at position 1915 (m3Psi1915) in 23S rRNA. This chain is Ribosomal RNA large subunit methyltransferase H, found in Alcanivorax borkumensis (strain ATCC 700651 / DSM 11573 / NCIMB 13689 / SK2).